Here is a 555-residue protein sequence, read N- to C-terminus: E3 ubiquitin-protein ligase ARIH1 (555 aa).

Positions 1 to 47 (MDSDEGYNYEFDEDEECSEEDSGAEEEEDDDEDEPDDDNLDLGEVEL) are enriched in acidic residues. Residues 1–93 (MDSDEGYNYE…GGGGGPGHEQ (93 aa)) form a disordered region. The span at 65–90 (ETGGGGGSALGPGGGGGGGGGGGGPG) shows a compositional bias: gly residues. The tract at residues 103–151 (TAEQILQHMVECIREVNEVIQNPATITRILLSHFNWDKEKLMERYFDGN) is UBA-like. Lys-140 is modified (N6-acetyllysine). Residues 180–391 (QDMPCQICYL…SAWYNCNRYN (212 aa)) form a TRIAD supradomain region. 18 residues coordinate Zn(2+): Cys-184, Cys-187, Cys-201, His-203, Cys-206, Cys-209, Cys-229, Cys-234, Cys-274, Cys-279, Cys-295, Cys-297, Cys-302, Cys-305, His-310, Cys-315, Cys-342, and Cys-345. An RING-type 1 zinc finger spans residues 184-234 (CQICYLNYPNSYFTGLECGHKFCMQCWSEYLTTKIMEEGMGQTISCPAHGC). Residues 254–315 (LKYQHLITNS…GENWHDPVKC (62 aa)) form an IBR-type zinc finger. The segment at 342-373 (CPKCHVTIEKDGGCNHMVCRNQNCKAEFCWVC) adopts an RING-type 2; atypical zinc-finger fold. Cys-355 is an active-site residue. Zn(2+) contacts are provided by Cys-360, Cys-365, Cys-370, Cys-373, His-380, and Cys-387. Residues 406 to 555 (RAALQRYLFY…EKDLWEYIED (150 aa)) are ariadne domain.

This sequence belongs to the RBR family. Ariadne subfamily. In terms of assembly, interacts (via the first RING-type zinc finger) with UBE2L3. Associates with cullin-RING ubiquitin ligase (CRL) complexes containing CUL1, CUL2 and CUL3. Interacts with neddylated CUL1. Interacts with neddylated CUL2. Interacts with neddylated CUL3. Interacts with neddylated CUL4A. As to expression, widely expressed.

The protein localises to the cytoplasm. Its subcellular location is the nucleus. It is found in the cajal body. It carries out the reaction [E2 ubiquitin-conjugating enzyme]-S-ubiquitinyl-L-cysteine + [acceptor protein]-L-lysine = [E2 ubiquitin-conjugating enzyme]-L-cysteine + [acceptor protein]-N(6)-ubiquitinyl-L-lysine.. It participates in protein modification; protein ubiquitination. Its activity is regulated as follows. Autoinhibited by the ariadne domain, which masks the second RING-type zinc finger that contains the active site and inhibits the E3 activity. Inhibition is relieved upon binding to neddylated cullin-RING ubiquitin ligase complexes, which activate the E3 ligase activity of ARIH1. Functionally, E3 ubiquitin-protein ligase, which catalyzes ubiquitination of target proteins together with ubiquitin-conjugating enzyme E2 UBE2L3. Acts as an atypical E3 ubiquitin-protein ligase by working together with cullin-RING ubiquitin ligase (CRL) complexes and initiating ubiquitination of CRL substrates: associates with CRL complexes and specifically mediates addition of the first ubiquitin on CRLs targets. The initial ubiquitin is then elongated by CDC34/UBE2R1 and UBE2R2. E3 ubiquitin-protein ligase activity is activated upon binding to neddylated cullin-RING ubiquitin ligase complexes. Plays a role in protein translation in response to DNA damage by mediating ubiquitination of EIF4E2, the consequences of EIF4E2 ubiquitination are however unclear. According to a report, EIF4E2 ubiquitination leads to promote EIF4E2 cap-binding and protein translation arrest. According to another report EIF4E2 ubiquitination leads to its subsequent degradation. Acts as the ligase involved in ISGylation of EIF4E2. In vitro, controls the degradation of the LINC (LInker of Nucleoskeleton and Cytoskeleton) complex member SUN2 and may therefore have a role in the formation and localization of the LINC complex, and as a consequence, may act in nuclear subcellular localization and nuclear morphology. The polypeptide is E3 ubiquitin-protein ligase ARIH1 (Arih1) (Mus musculus (Mouse)).